We begin with the raw amino-acid sequence, 149 residues long: UPF0756 membrane protein BBR47_12340 (149 aa).

4 helical membrane-spanning segments follow: residues 6–26, 48–68, 86–106, and 120–140; these read IILL…LVYA, PMFH…IAKG, IAIL…SILP, and LLAV…AGCI.

It belongs to the UPF0756 family.

Its subcellular location is the cell membrane. The polypeptide is UPF0756 membrane protein BBR47_12340 (Brevibacillus brevis (strain 47 / JCM 6285 / NBRC 100599)).